The following is a 179-amino-acid chain: Large ribosomal subunit protein uL5 (179 aa).

This sequence belongs to the universal ribosomal protein uL5 family. Part of the 50S ribosomal subunit; part of the 5S rRNA/L5/L18/L25 subcomplex. Contacts the 5S rRNA and the P site tRNA. Forms a bridge to the 30S subunit in the 70S ribosome.

In terms of biological role, this is one of the proteins that bind and probably mediate the attachment of the 5S RNA into the large ribosomal subunit, where it forms part of the central protuberance. In the 70S ribosome it contacts protein S13 of the 30S subunit (bridge B1b), connecting the 2 subunits; this bridge is implicated in subunit movement. Contacts the P site tRNA; the 5S rRNA and some of its associated proteins might help stabilize positioning of ribosome-bound tRNAs. The chain is Large ribosomal subunit protein uL5 from Geobacter sulfurreducens (strain ATCC 51573 / DSM 12127 / PCA).